The following is a 253-amino-acid chain: Ribonuclease HII (253 aa).

The 184-residue stretch at Asp70–Leu253 folds into the RNase H type-2 domain. Positions 76, 77, and 168 each coordinate a divalent metal cation.

It belongs to the RNase HII family. The cofactor is Mn(2+). Requires Mg(2+) as cofactor.

The protein localises to the cytoplasm. The enzyme catalyses Endonucleolytic cleavage to 5'-phosphomonoester.. Endonuclease that specifically degrades the RNA of RNA-DNA hybrids. This Leuconostoc mesenteroides subsp. mesenteroides (strain ATCC 8293 / DSM 20343 / BCRC 11652 / CCM 1803 / JCM 6124 / NCDO 523 / NBRC 100496 / NCIMB 8023 / NCTC 12954 / NRRL B-1118 / 37Y) protein is Ribonuclease HII.